The chain runs to 330 residues: D-alanine--D-alanine ligase (330 aa).

The region spanning 122–323 is the ATP-grasp domain; that stretch reads NRFLSGFGIR…MKEVLCTIIR (202 aa). Residue 151–206 participates in ATP binding; that stretch reads TARMGLPLFVKPNVGGSSIATTKVVEAAQLLPAIGQAFSEGEEVMIERLICGTEVT. Mg(2+) contacts are provided by D277, E290, and N292.

It belongs to the D-alanine--D-alanine ligase family. Requires Mg(2+) as cofactor. Mn(2+) serves as cofactor.

It localises to the cytoplasm. It carries out the reaction 2 D-alanine + ATP = D-alanyl-D-alanine + ADP + phosphate + H(+). Its pathway is cell wall biogenesis; peptidoglycan biosynthesis. In terms of biological role, cell wall formation. The protein is D-alanine--D-alanine ligase of Porphyromonas gingivalis (strain ATCC 33277 / DSM 20709 / CIP 103683 / JCM 12257 / NCTC 11834 / 2561).